The primary structure comprises 886 residues: General transcription factor 3C polypeptide 3 (886 aa).

A disordered region spans residues 1 to 121 (MSGFSPELID…TPEQPTAGDV (121 aa)). Ser2 carries the post-translational modification N-acetylserine. The segment covering 12 to 44 (LEGKISFEEFERRREERKTREKKSLQEKGKLSA) has biased composition (basic and acidic residues). At Ser43 the chain carries Phosphoserine. Residues 53–63 (VPSSSGINSTK) show a composition bias toward polar residues. Positions 92-113 (ENEDDEEEEEEEEEEEEEEETP) are enriched in acidic residues. TPR repeat units lie at residues 149–182 (LRGL…APLA), 183–216 (YEPF…NPSD), 217–250 (TEEW…EPTN), 252–284 (RYLW…LSPS), 290–323 (MQLA…HQGL), 326–361 (MEDV…EKKT), 421–454 (GDLY…ERYN), 456–489 (AVVW…APLH), 491–523 (DARI…DTLA), 733–766 (HALC…HPDE), and 811–844 (QESF…PPLV). Ser282 carries the post-translational modification Phosphoserine.

In terms of assembly, part of the TFIIIC subcomplex TFIIIC2, consisting of six subunits, GTF3C1, GTF3C2, GTF3C3, GTF3C4, GTF3C5 and GTF3C6. Interacts with BRF1 and TBP.

Its subcellular location is the nucleus. Involved in RNA polymerase III-mediated transcription. Integral, tightly associated component of the DNA-binding TFIIIC2 subcomplex that directly binds tRNA and virus-associated RNA promoters. This is General transcription factor 3C polypeptide 3 (GTF3C3) from Homo sapiens (Human).